Here is a 346-residue protein sequence, read N- to C-terminus: Propane 2-monooxygenase, reductase component (346 aa).

The 2Fe-2S ferredoxin-type domain occupies 5–94 (HKISFEPVDI…DCEIELLNFD (90 aa)). [2Fe-2S] cluster is bound by residues Cys39, Cys44, Cys46, and Cys78. An FAD-binding FR-type domain is found at 104–205 (IQDVTTKVAA…NGPYGSCTLR (102 aa)).

Belongs to the bacterial ring-hydroxylating dioxygenase ferredoxin reductase family. As to quaternary structure, the propane 2-monooxygenase multicomponent enzyme system is composed of an electron transfer component and a monooxygenase component interacting with the effector protein PrmD. The electron transfer component is composed of a reductase (PrmB), and the monooxygenase component is formed by a large subunit (PrmA) and a small subunit (PrmC). Requires FAD as cofactor. It depends on [2Fe-2S] cluster as a cofactor.

Reductase component of the propane 2-monooxygenase multicomponent enzyme system which is involved in the degradation of propane via the O2-dependent hydroxylation of propane. Reductase catalyzes the transfer of electrons from NADH or NADPH to monooxygenase. The protein is Propane 2-monooxygenase, reductase component of Gordonia sp. (strain TY-5).